Here is a 417-residue protein sequence, read N- to C-terminus: D-amino acid dehydrogenase (417 aa).

3 to 17 (IVVLGGGVVGVTSAW) contacts FAD.

Belongs to the DadA oxidoreductase family. Requires FAD as cofactor.

It carries out the reaction a D-alpha-amino acid + A + H2O = a 2-oxocarboxylate + AH2 + NH4(+). The protein operates within amino-acid degradation; D-alanine degradation; NH(3) and pyruvate from D-alanine: step 1/1. Oxidative deamination of D-amino acids. This Aeromonas salmonicida (strain A449) protein is D-amino acid dehydrogenase.